Here is a 317-residue protein sequence, read N- to C-terminus: MPAQGSQRSLLGSLNSTLMATSSLGLSANQSGPQCLEVSVPDGLFLCLGLVSLVENMLVVAAIAKNRNLHSPMYCFICCLALSDLLVSVSNVLETAVMLLLEAGALAAQATVVQQLDNIIDVLVCSSMVSSLCFLGAIAMDRYISIFYALRYHSIVTLSRAQWATAAVWAAGILSSTLFIAYYDHTAVLLCLVVFFLAMLVLMAVLYAHMLTQACQHVQGITRLHKRQHLVQQGFGLKGAATLTILLGVFLLCWGPFFLHLTLIAVCPQHPTCSCVFKNFKLFLALIICNAIVDPLIYAFRXQELRKTLKEVLLFSW.

Topologically, residues 1-37 are extracellular; the sequence is MPAQGSQRSLLGSLNSTLMATSSLGLSANQSGPQCLE. N-linked (GlcNAc...) asparagine glycans are attached at residues N15 and N29. A helical transmembrane segment spans residues 38–63; it reads VSVPDGLFLCLGLVSLVENMLVVAAI. Residues 64–72 lie on the Cytoplasmic side of the membrane; that stretch reads AKNRNLHSP. A helical membrane pass occupies residues 73–93; the sequence is MYCFICCLALSDLLVSVSNVL. The Extracellular portion of the chain corresponds to 94 to 118; that stretch reads ETAVMLLLEAGALAAQATVVQQLDN. The chain crosses the membrane as a helical span at residues 119 to 140; the sequence is IIDVLVCSSMVSSLCFLGAIAM. At 141–163 the chain is on the cytoplasmic side; that stretch reads DRYISIFYALRYHSIVTLSRAQW. A helical transmembrane segment spans residues 164–183; it reads ATAAVWAAGILSSTLFIAYY. Topologically, residues 184 to 191 are extracellular; sequence DHTAVLLC. The chain crosses the membrane as a helical span at residues 192–211; sequence LVVFFLAMLVLMAVLYAHML. The Cytoplasmic portion of the chain corresponds to 212 to 240; the sequence is TQACQHVQGITRLHKRQHLVQQGFGLKGA. Residues 241 to 266 traverse the membrane as a helical segment; it reads ATLTILLGVFLLCWGPFFLHLTLIAV. At 267–279 the chain is on the extracellular side; sequence CPQHPTCSCVFKN. A helical transmembrane segment spans residues 280-300; sequence FKLFLALIICNAIVDPLIYAF. Topologically, residues 301-317 are cytoplasmic; that stretch reads RXQELRKTLKEVLLFSW.

This sequence belongs to the G-protein coupled receptor 1 family. As to quaternary structure, interacts with MGRN1, but does not undergo MGRN1-mediated ubiquitination; this interaction competes with GNAS-binding and thus inhibits agonist-induced cAMP production. Interacts with OPN3; the interaction results in a decrease in MC1R-mediated cAMP signaling and ultimately a decrease in melanin production in melanocytes.

The protein resides in the cell membrane. In terms of biological role, receptor for MSH (alpha, beta and gamma) and ACTH. The activity of this receptor is mediated by G proteins which activate adenylate cyclase. Mediates melanogenesis, the production of eumelanin (black/brown) and phaeomelanin (red/yellow), via regulation of cAMP signaling in melanocytes. The sequence is that of Melanocyte-stimulating hormone receptor (MC1R) from Loris tardigradus (Slender loris).